Here is a 513-residue protein sequence, read N- to C-terminus: Xylose import ATP-binding protein XylG (513 aa).

ABC transporter domains follow at residues 5–242 and 259–505; these read LEMK…VGRE and LRIE…LRSE. Residue 37–44 participates in ATP binding; that stretch reads GENGSGKS.

It belongs to the ABC transporter superfamily. Xylose importer (TC 3.A.1.2.4) family. As to quaternary structure, the complex is composed of two ATP-binding proteins (XylG), two transmembrane proteins (XylH) and a solute-binding protein (XylF).

The protein localises to the cell inner membrane. It carries out the reaction D-xylose(out) + ATP + H2O = D-xylose(in) + ADP + phosphate + H(+). Part of the ABC transporter complex XylFGH involved in xylose import. Responsible for energy coupling to the transport system. The XylFGH system can also transport ribose in absence of xylose. This chain is Xylose import ATP-binding protein XylG, found in Escherichia coli (strain K12).